The primary structure comprises 346 residues: Cytidine deaminase 5 (346 aa).

CMP/dCMP-type deaminase domains are found at residues 20–148 and 183–304; these read TDHK…FGSE and DLCS…ITGA. 58 to 60 is a substrate binding site; the sequence is NVE. Histidine 71 contributes to the Zn(2+) binding site. The active-site Proton donor is glutamate 73. 2 residues coordinate Zn(2+): cysteine 104 and cysteine 107.

Belongs to the cytidine and deoxycytidylate deaminase family. In terms of assembly, homodimer. The cofactor is Zn(2+).

It carries out the reaction cytidine + H2O + H(+) = uridine + NH4(+). It catalyses the reaction 2'-deoxycytidine + H2O + H(+) = 2'-deoxyuridine + NH4(+). Its function is as follows. This enzyme scavenges exogenous and endogenous cytidine and 2'-deoxycytidine for UMP synthesis. In Arabidopsis thaliana (Mouse-ear cress), this protein is Cytidine deaminase 5 (CDA5).